A 371-amino-acid chain; its full sequence is DNA repair protein RAD14 (371 aa).

The tract at residues 26 to 48 is disordered; that stretch reads LSSDQLNRIESRNEPLKTRPLAV. Positions 32 to 42 are enriched in basic and acidic residues; sequence NRIESRNEPLK. The Zn(2+) site is built by Cys191, Cys194, Cys213, and Cys216. A zinc finger lies at 191–216; sequence CIECHINIEMDPVLHDVFKLQVCKQC.

Belongs to the XPA family. In terms of assembly, two monomers bind to kinked/damaged DNA (construct with only the C-terminal DNA-binding domain). Component of the nucleotide excision repair factor 1 (NEF1) complex consisting of RAD1, RAD10 and RAD14.

Its subcellular location is the nucleus. Functionally, involved in nucleotide excision repair. Binds specifically to damaged DNA. Required for the incision step. This Saccharomyces cerevisiae (strain ATCC 204508 / S288c) (Baker's yeast) protein is DNA repair protein RAD14 (RAD14).